A 519-amino-acid chain; its full sequence is MATTSTTGSTLLQPLSNAVQLPIDQVNFVVCQLFALLAAVWFRTYLHSSKTSSFIRHVVATLLGLYLAFFCFGWYALHFLVQSGISYCIMIIAGVESMQQCCFVFALGYLSVCQITRVYIFDYGQYSADFSGPMMIITQKITSLAYEIHDGMFRKDEELTPSQRGLAVRRMPSLLEYVSYTCNFMGILAGPLCSYKDYIAFIEGRASHVAQPSENGKDEQHGKADPSPNAAVTEKLLVCGLSLLFHLTISNMLPVEYNIDEHFQATASWPTKATYLYVSLLAARPKYYFAWTLADAINNAAGFGFRGYDKNGVARWDLISNLRIQQIEMSTSFKMFLDNWNIQTALWLKRVCYERATFSPTIQTFFLSAIWHGVYPGYYLTFLTGVLMTLAARAVRNNFRHYFLEPPQLKLFYDLITWVATQITISYTVVPFVLLSIKPSFTFYSSWYYCLHVCSILVLLLLPVKKSQRRTSTQENVHLSQAKKFDERDNPLGQNSFSTMNNVCNQNRDTGSRHSSLTQ.

Helical transmembrane passes span 22 to 42 (PIDQ…AVWF), 61 to 81 (TLLG…HFLV), 88 to 108 (CIMI…FALG), 184 to 204 (FMGI…FIEG), 236 to 256 (LLVC…LPVE), and 263 to 283 (FQAT…LLAA). Catalysis depends on residues N341 and H372. 3 consecutive transmembrane segments (helical) span residues 365–385 (FFLS…FLTG), 415–435 (LITW…FVLL), and 443–463 (FYSS…LLLP). The segment at 497–519 (FSTMNNVCNQNRDTGSRHSSLTQ) is disordered.

This sequence belongs to the membrane-bound acyltransferase family. In terms of tissue distribution, highly expressed in epididymis, brain, testis, and ovary.

It localises to the endoplasmic reticulum membrane. It carries out the reaction a 1-acyl-sn-glycero-3-phosphocholine + an acyl-CoA = a 1,2-diacyl-sn-glycero-3-phosphocholine + CoA. The enzyme catalyses a 1-acyl-sn-glycero-3-phosphoethanolamine + an acyl-CoA = a 1,2-diacyl-sn-glycero-3-phosphoethanolamine + CoA. It catalyses the reaction a 1-O-(1Z-alkenyl)-sn-glycero-3-phosphocholine + (9Z)-octadecenoyl-CoA = 1-O-(1Z)-alkenyl-2-(9Z)-octadecenoyl-sn-glycero-3-phosphocholine + CoA. The catalysed reaction is a 1-O-(1Z-alkenyl)-sn-glycero-3-phosphoethanolamine + (9Z)-octadecenoyl-CoA = 1-O-(1Z)-alkenyl-2-(9Z)-octadecenoyl-sn-glycero-3-phosphoethanolamine + CoA. It carries out the reaction 1-octadecanoyl-sn-glycero-3-phosphoethanolamine + (9Z)-octadecenoyl-CoA = 1-octadecanoyl-2-(9Z-octadecenoyl)-sn-glycero-3-phosphoethanolamine + CoA. The enzyme catalyses 1-octadecanoyl-sn-glycero-3-phosphocholine + (9Z)-octadecenoyl-CoA = 1-octadecanoyl-2-(9Z-octadecenoyl)-sn-glycero-3-phosphocholine + CoA. It catalyses the reaction 1-(9Z-octadecenoyl)-sn-glycero-3-phosphoethanolamine + (9Z)-octadecenoyl-CoA = 1,2-di-(9Z-octadecenoyl)-sn-glycero-3-phosphoethanolamine + CoA. The catalysed reaction is 1-hexadecanoyl-sn-glycero-3-phosphoethanolamine + (9Z)-octadecenoyl-CoA = 1-hexadecanoyl-2-(9Z-octadecenoyl)-sn-glycero-3-phosphoethanolamine + CoA. It carries out the reaction 1-hexadecanoyl-sn-glycero-3-phosphocholine + (9Z)-octadecenoyl-CoA = 1-hexadecanoyl-2-(9Z-octadecenoyl)-sn-glycero-3-phosphocholine + CoA. The enzyme catalyses (9Z)-hexadecenoyl-CoA + 1-hexadecanoyl-sn-glycero-3-phosphocholine = 1-hexadecanoyl-2-(9Z-hexadecenoyl)-sn-glycero-3-phosphocholine + CoA. It catalyses the reaction 1-hexadecanoyl-sn-glycero-3-phosphoethanolamine + (9Z)-hexadecenoyl-CoA = 1-hexadecanoyl-2-(9Z)-hexadecenoyl-sn-glycero-3-phosphoethanolamine + CoA. The catalysed reaction is (9Z,12Z)-octadecadienoyl-CoA + 1-hexadecanoyl-sn-glycero-3-phosphocholine = 1-hexadecanoyl-2-(9Z,12Z-octadecadienoyl)-sn-glycero-3-phosphocholine + CoA. The protein operates within lipid metabolism; phospholipid metabolism. Partially inhibited by thimerosal. Functionally, acyltransferase which catalyzes the transfer of an acyl group from an acyl-CoA to a lysophospholipid leading to the production of a phospholipid and participates in the reacylation step of the phospholipid remodeling pathway also known as the Lands cycle. Catalyzes the acylation of lysophosphatidylcholine (1-acyl-sn-glycero-3-phosphocholine or LPC) and to a lesser extend lysophosphatidylethanolamine (1-acyl-sn-glycero-3-phosphoethanolamine or LPE). Does not acylates lysophosphatidic acid (LPA) and lysophosphatidylserine. Prefers oleoyl-CoA as the acyl donor. May be involved in chondrocyte differentiation. This Mus musculus (Mouse) protein is Membrane-bound glycerophospholipid O-acyltransferase 2.